A 279-amino-acid polypeptide reads, in one-letter code: uncharacterized protein (279 aa).

The segment at 1–28 (MGLFGGGNSKSTSNQTTNNENTNIATQG) is disordered. Residues 9–23 (SKSTSNQTTNNENTN) are compositionally biased toward low complexity. The chain crosses the membrane as a helical span at residues 256-273 (KTLMIGIVAVSAAVGLYA).

Its subcellular location is the host membrane. This is an uncharacterized protein from Pseudoalteromonas espejiana (Bacteriophage PM2).